The chain runs to 351 residues: MAITPEKEKALAAAMAQIDRKFGKGSIMKMGEVGGRLAIEAIPTGSIALDIALGIGGVPRGRVIEIFGPESSGKTTLAQHIIAEAQKMGGVGAFIDAEHAFDPVYAARCGVNISDLLVSQPDTGEQALEICEMLVRSNAVDVIVIDSVAALVPRAEIEGDMGDSMPGMQARLMSQALRKLSGAISKSRAVVIFINQLRMKIGVMFGSPETTTGGQALKFYASVRLDIRRIETLKQGQEAIGSRVRVKVIKNKVAPPFRQAEFDILANEGISREGNIIDIGTELGIIRKSGAWFYLGEDRLGQGRENVREFLKNNPALTDEIERLIKAQALTNPSAIAPSADIGDDDGVFEE.

68–75 (GPESSGKT) contacts ATP.

Belongs to the RecA family.

Its subcellular location is the cytoplasm. Can catalyze the hydrolysis of ATP in the presence of single-stranded DNA, the ATP-dependent uptake of single-stranded DNA by duplex DNA, and the ATP-dependent hybridization of homologous single-stranded DNAs. It interacts with LexA causing its activation and leading to its autocatalytic cleavage. This is Protein RecA from Chloroflexus aggregans (strain MD-66 / DSM 9485).